A 308-amino-acid polypeptide reads, in one-letter code: UPF0282 protein STK_23220 (308 aa).

The protein belongs to the UPF0282 family.

This Sulfurisphaera tokodaii (strain DSM 16993 / JCM 10545 / NBRC 100140 / 7) (Sulfolobus tokodaii) protein is UPF0282 protein STK_23220.